The chain runs to 183 residues: Small ribosomal subunit protein eS10z (183 aa).

Positions 91–183 (LKKSARPPGR…GAGPTSSSME (93 aa)) are disordered. Basic and acidic residues predominate over residues 109-130 (DRPRGPPRFEGDRPRFGDRDGY). 2 stretches are compositionally biased toward gly residues: residues 131–146 (RGGPRGAPGDFGGEKG) and 161–175 (GRPGFGRGGGGGFGA).

Belongs to the eukaryotic ribosomal protein eS10 family.

The protein localises to the cytoplasm. The polypeptide is Small ribosomal subunit protein eS10z (Oryza sativa subsp. japonica (Rice)).